The primary structure comprises 209 residues: MQPRRIARELALLALSQLPQKPERLTTQDLQSVVVAAVRTLAGEAQDALETAAMELKRGRDRLLASEIQAVDVQSSRAMVTEAITLAETAVNRLGMVLDLPEFVQLANQQQVRDFSLDILKQVLTHRTAIDHLLETALVDWQFNRLAQIDRNILRIAVAEILYLKTPTQVTINEAVELAKRYSDEDGYRFVNGVLRRTIPHLEAQAQGT.

This sequence belongs to the NusB family.

Involved in transcription antitermination. Required for transcription of ribosomal RNA (rRNA) genes. Binds specifically to the boxA antiterminator sequence of the ribosomal RNA (rrn) operons. The protein is Transcription antitermination protein NusB of Cyanothece sp. (strain PCC 7425 / ATCC 29141).